Here is a 260-residue protein sequence, read N- to C-terminus: Diphthine synthase (260 aa).

S-adenosyl-L-methionine contacts are provided by residues Leu-9, Asp-85, Ile-88, 113–114 (TA), Leu-168, Ala-202, and His-227.

This sequence belongs to the diphthine synthase family. Homodimer.

The catalysed reaction is 2-[(3S)-amino-3-carboxypropyl]-L-histidyl-[translation elongation factor 2] + 3 S-adenosyl-L-methionine = diphthine-[translation elongation factor 2] + 3 S-adenosyl-L-homocysteine + 3 H(+). The protein operates within protein modification; peptidyl-diphthamide biosynthesis. Functionally, S-adenosyl-L-methionine-dependent methyltransferase that catalyzes the trimethylation of the amino group of the modified target histidine residue in translation elongation factor 2 (EF-2), to form an intermediate called diphthine. The three successive methylation reactions represent the second step of diphthamide biosynthesis. The protein is Diphthine synthase of Haloquadratum walsbyi (strain DSM 16790 / HBSQ001).